A 258-amino-acid polypeptide reads, in one-letter code: Alpha-fibrinogenase-like (258 aa).

The first 18 residues, 1 to 18 (MVLIRVLANLLVLQLSYA), serve as a signal peptide directing secretion. Residues 19-24 (QKSSEL) constitute a propeptide that is removed on maturation. A Peptidase S1 domain is found at 25 to 249 (VVGGHPCNIY…YTDWIHSIIA (225 aa)). 6 disulfide bridges follow: Cys-31–Cys-163, Cys-50–Cys-66, Cys-98–Cys-256, Cys-142–Cys-210, Cys-174–Cys-189, and Cys-200–Cys-225. Asn-44 carries N-linked (GlcNAc...) asparagine glycosylation. Catalysis depends on charge relay system residues His-65 and Asp-110. Catalysis depends on Ser-204, which acts as the Charge relay system.

It belongs to the peptidase S1 family. Snake venom subfamily. As to quaternary structure, monomer. Expressed by the venom gland.

It is found in the secreted. Its function is as follows. Degrades alpha chain of fibrinogen (FGA), and has strong caseinolytic activity. Cleaves oxidized insulin B-chain at '40-Tyr-|-Leu-41', '48-Phe-|-Phe-49' and '49-Phe-|-Tyr-50', and glucagon at the bonds '62-Tyr-|-Ser-63', 66-Leu-|-Asp-67' and '78-Leu-|-Met-79' bonds. The polypeptide is Alpha-fibrinogenase-like (Daboia siamensis (Eastern Russel's viper)).